Here is a 437-residue protein sequence, read N- to C-terminus: Serine carboxypeptidase-like 17 (437 aa).

An N-terminal signal peptide occupies residues 1–26; the sequence is MGKECYYLSWILKFHLLLVLIQLVDS. 3 disulfides stabilise this stretch: Cys-85–Cys-327, Cys-249–Cys-263, and Cys-287–Cys-293. The N-linked (GlcNAc...) asparagine glycan is linked to Asn-106. Ser-181 is a catalytic residue. Asp-362 is a catalytic residue. N-linked (GlcNAc...) asparagine glycosylation occurs at Asn-378. His-415 is an active-site residue.

It belongs to the peptidase S10 family. Expressed in seedlings and siliques.

The protein localises to the secreted. Functionally, probable carboxypeptidase. The polypeptide is Serine carboxypeptidase-like 17 (SCPL17) (Arabidopsis thaliana (Mouse-ear cress)).